Consider the following 123-residue polypeptide: Large ribosomal subunit protein bL12 (123 aa).

Belongs to the bacterial ribosomal protein bL12 family. Homodimer. Part of the ribosomal stalk of the 50S ribosomal subunit. Forms a multimeric L10(L12)X complex, where L10 forms an elongated spine to which 2 to 4 L12 dimers bind in a sequential fashion. Binds GTP-bound translation factors.

Forms part of the ribosomal stalk which helps the ribosome interact with GTP-bound translation factors. Is thus essential for accurate translation. This Neisseria perflava protein is Large ribosomal subunit protein bL12.